A 249-amino-acid polypeptide reads, in one-letter code: tRNA pseudouridine synthase A (249 aa).

Asp53 (nucleophile) is an active-site residue. Tyr111 lines the substrate pocket.

The protein belongs to the tRNA pseudouridine synthase TruA family. Homodimer.

The catalysed reaction is uridine(38/39/40) in tRNA = pseudouridine(38/39/40) in tRNA. In terms of biological role, formation of pseudouridine at positions 38, 39 and 40 in the anticodon stem and loop of transfer RNAs. The protein is tRNA pseudouridine synthase A of Streptococcus gordonii (strain Challis / ATCC 35105 / BCRC 15272 / CH1 / DL1 / V288).